We begin with the raw amino-acid sequence, 272 residues long: Catechol O-methyltransferase (272 aa).

Topologically, residues 1 to 6 (MLEAPP) are cytoplasmic. A helical; Signal-anchor for type II membrane protein membrane pass occupies residues 7 to 27 (LLLVAGGVGLALLALRWLATT). Residues 28-272 (DLQFFGRAFI…YKGLSGPARP (245 aa)) are Extracellular-facing. S-adenosyl-L-methionine is bound by residues V93, E115, S123, E141, 168–171 (GASQ), S170, and D192. Position 192 (D192) interacts with Mg(2+). Residue K195 coordinates substrate. Residues D220 and N221 each coordinate Mg(2+). Positions 221 and 250 each coordinate substrate. A Phosphoserine modification is found at S267.

Belongs to the class I-like SAM-binding methyltransferase superfamily. Cation-dependent O-methyltransferase family. It depends on Mg(2+) as a cofactor.

Its subcellular location is the cytoplasm. The protein resides in the cell membrane. The enzyme catalyses a catechol + S-adenosyl-L-methionine = a guaiacol + S-adenosyl-L-homocysteine + H(+). It carries out the reaction 2-hydroxyestrone + S-adenosyl-L-methionine = 2-hydroxy-3-methoxy-estrone + S-adenosyl-L-homocysteine + H(+). It catalyses the reaction 4-hydroxyestrone + S-adenosyl-L-methionine = 4-methoxyestrone + S-adenosyl-L-homocysteine + H(+). The catalysed reaction is 2-hydroxyestrone + S-adenosyl-L-methionine = 2-methoxyestrone + S-adenosyl-L-homocysteine + H(+). The enzyme catalyses 4-hydroxy-17beta-estradiol + S-adenosyl-L-methionine = 4-methoxy-17beta-estradiol + S-adenosyl-L-homocysteine + H(+). It carries out the reaction 2-hydroxy-17beta-estradiol + S-adenosyl-L-methionine = 2-hydroxy-3-methoxy-17beta-estradiol + S-adenosyl-L-homocysteine + H(+). It catalyses the reaction 2-hydroxy-17beta-estradiol + S-adenosyl-L-methionine = 2-methoxy-17beta-estradiol + S-adenosyl-L-homocysteine + H(+). Its function is as follows. Catalyzes the O-methylation, and thereby the inactivation, of catecholamine neurotransmitters and catechol hormones. Also shortens the biological half-lives of certain neuroactive drugs, like L-DOPA, alpha-methyl DOPA and isoproterenol. This Bos taurus (Bovine) protein is Catechol O-methyltransferase (COMT).